An 888-amino-acid polypeptide reads, in one-letter code: Alanine--tRNA ligase (888 aa).

Zn(2+) contacts are provided by His573, His577, Cys676, and His680.

This sequence belongs to the class-II aminoacyl-tRNA synthetase family. Requires Zn(2+) as cofactor.

It is found in the cytoplasm. It carries out the reaction tRNA(Ala) + L-alanine + ATP = L-alanyl-tRNA(Ala) + AMP + diphosphate. Catalyzes the attachment of alanine to tRNA(Ala) in a two-step reaction: alanine is first activated by ATP to form Ala-AMP and then transferred to the acceptor end of tRNA(Ala). Also edits incorrectly charged Ser-tRNA(Ala) and Gly-tRNA(Ala) via its editing domain. The protein is Alanine--tRNA ligase of Corynebacterium glutamicum (strain R).